The chain runs to 867 residues: Valine--tRNA ligase (867 aa).

The 'HIGH' region motif lies at 42 to 52 (PNITGKIHMGH). Positions 521 to 525 (KMSKS) match the 'KMSKS' region motif. An ATP-binding site is contributed by Lys524. Positions 794–867 (LGTLIDVKSE…QIISDLEAKA (74 aa)) form a coiled coil.

The protein belongs to the class-I aminoacyl-tRNA synthetase family. ValS type 1 subfamily. As to quaternary structure, monomer.

Its subcellular location is the cytoplasm. It catalyses the reaction tRNA(Val) + L-valine + ATP = L-valyl-tRNA(Val) + AMP + diphosphate. Its function is as follows. Catalyzes the attachment of valine to tRNA(Val). As ValRS can inadvertently accommodate and process structurally similar amino acids such as threonine, to avoid such errors, it has a 'posttransfer' editing activity that hydrolyzes mischarged Thr-tRNA(Val) in a tRNA-dependent manner. This Fervidobacterium nodosum (strain ATCC 35602 / DSM 5306 / Rt17-B1) protein is Valine--tRNA ligase.